Here is a 333-residue protein sequence, read N- to C-terminus: F420-dependent glucose-6-phosphate dehydrogenase (333 aa).

Residue Asp-37 participates in coenzyme F420-(gamma-Glu)n binding. The active-site Proton donor is the His-38. Coenzyme F420-(gamma-Glu)n-binding positions include Thr-74 and 105-106 (SG). Glu-107 functions as the Proton acceptor in the catalytic mechanism. Coenzyme F420-(gamma-Glu)n contacts are provided by residues Asn-110, 174–175 (GG), and 177–178 (VV). 4 residues coordinate substrate: Thr-192, Lys-195, Lys-256, and Arg-280.

This sequence belongs to the F420-dependent glucose-6-phosphate dehydrogenase family. As to quaternary structure, homodimer.

The catalysed reaction is oxidized coenzyme F420-(gamma-L-Glu)(n) + D-glucose 6-phosphate + H(+) = 6-phospho-D-glucono-1,5-lactone + reduced coenzyme F420-(gamma-L-Glu)(n). Functionally, catalyzes the coenzyme F420-dependent oxidation of glucose 6-phosphate (G6P) to 6-phosphogluconolactone. The polypeptide is F420-dependent glucose-6-phosphate dehydrogenase (Amycolatopsis mediterranei (strain U-32)).